The sequence spans 491 residues: Ketol-acid reductoisomerase (NADP(+)) (491 aa).

The KARI N-terminal Rossmann domain occupies 15 to 208 (AQLGKCRFMG…GGHRAGVLES (194 aa)). Residues 45-48 (CGAQ), Arg68, Arg76, Ser78, and 108-110 (DKQ) each bind NADP(+). The active site involves His132. Position 158 (Gly158) interacts with NADP(+). KARI C-terminal knotted domains are found at residues 209–344 (SFVA…TAPQ) and 345–484 (FEGK…MTDM). Asp217, Glu221, Glu389, and Glu393 together coordinate Mg(2+). Ser414 contributes to the substrate binding site.

Belongs to the ketol-acid reductoisomerase family. It depends on Mg(2+) as a cofactor.

It carries out the reaction (2R)-2,3-dihydroxy-3-methylbutanoate + NADP(+) = (2S)-2-acetolactate + NADPH + H(+). It catalyses the reaction (2R,3R)-2,3-dihydroxy-3-methylpentanoate + NADP(+) = (S)-2-ethyl-2-hydroxy-3-oxobutanoate + NADPH + H(+). The protein operates within amino-acid biosynthesis; L-isoleucine biosynthesis; L-isoleucine from 2-oxobutanoate: step 2/4. It functions in the pathway amino-acid biosynthesis; L-valine biosynthesis; L-valine from pyruvate: step 2/4. Functionally, involved in the biosynthesis of branched-chain amino acids (BCAA). Catalyzes an alkyl-migration followed by a ketol-acid reduction of (S)-2-acetolactate (S2AL) to yield (R)-2,3-dihydroxy-isovalerate. In the isomerase reaction, S2AL is rearranged via a Mg-dependent methyl migration to produce 3-hydroxy-3-methyl-2-ketobutyrate (HMKB). In the reductase reaction, this 2-ketoacid undergoes a metal-dependent reduction by NADPH to yield (R)-2,3-dihydroxy-isovalerate. The polypeptide is Ketol-acid reductoisomerase (NADP(+)) (Salmonella choleraesuis (strain SC-B67)).